The chain runs to 331 residues: Glycerophosphodiester phosphodiesterase 1 (331 aa).

Over 1–3 (MWL) the chain is Cytoplasmic. The helical transmembrane segment at 4 to 24 (WEDQGGLLGPFSFVLVLLLVV) threads the bilayer. Over 25–248 (TRSPFNACVL…PRYSVFWKQS (224 aa)) the chain is Lumenal. The 267-residue stretch at 65-331 (VSAIAHRGGS…SMLEDCAPHF (267 aa)) folds into the GP-PDE domain. Positions 97 and 99 each coordinate Mg(2+). The N-linked (GlcNAc...) asparagine glycan is linked to Asn-168. Asp-174 provides a ligand contact to Mg(2+). Residues 249 to 269 (VFVVLDILLDWSMHNVLWYLC) traverse the membrane as a helical segment. The Cytoplasmic segment spans residues 270–331 (GISAFLMQKD…SMLEDCAPHF (62 aa)).

Belongs to the glycerophosphoryl diester phosphodiesterase family. As to quaternary structure, interacts with PRAF2. Interacts with RGS16. The cofactor is Mg(2+). In terms of processing, N-glycosylated. As to expression, detected in heart, brain, lung, liver, skeletal muscle, kidney, pituitary and testis.

It is found in the cell membrane. Its subcellular location is the cytoplasmic vesicle membrane. The catalysed reaction is sn-glycero-3-phospho-1D-myo-inositol + H2O = myo-inositol + sn-glycerol 3-phosphate + H(+). It catalyses the reaction 1-O-(1Z-octadecenyl)-sn-glycero-3-phospho-(N-5Z,8Z,11Z,14Z-eicosatetraenoyl)-ethanolamine + H2O = 1-O-(1Z-octadecenyl)-sn-glycero-3-phosphate + N-(5Z,8Z,11Z,14Z-eicosatetraenoyl)-ethanolamine + H(+). It carries out the reaction 1-O-(1Z-octadecenyl)-sn-glycero-3-phospho-(N-9Z-octadecenoyl)-ethanolamine + H2O = 1-O-(1Z-octadecenyl)-sn-glycero-3-phosphate + N-(9Z-octadecenoyl) ethanolamine + H(+). The enzyme catalyses 1-O-(1Z-octadecenyl)-sn-glycero-3-phospho-N-hexadecanoyl-ethanolamine + H2O = 1-O-(1Z-octadecenyl)-sn-glycero-3-phosphate + N-hexadecanoylethanolamine + H(+). The catalysed reaction is N-(4Z,7Z,10Z,13Z,16Z,19Z)-docosahexaenoyl-sn-glycero-3-phosphoethanolamine + H2O = N-(4Z,7Z,10Z,13Z,16Z,19Z)-docosahexaenoyl ethanolamine + sn-glycerol 3-phosphate + H(+). It catalyses the reaction N-eicosanoyl-sn-glycero-3-phosphoethanolamine + H2O = N-eicosanoyl ethanolamine + sn-glycerol 3-phosphate + H(+). It carries out the reaction N-hexadecanoyl-sn-glycero-3-phosphoethanolamine + H2O = N-hexadecanoylethanolamine + sn-glycerol 3-phosphate + H(+). The enzyme catalyses N-(9Z-octadecenoyl)-sn-glycero-3-phosphoethanolamine + H2O = N-(9Z-octadecenoyl) ethanolamine + sn-glycerol 3-phosphate + H(+). The catalysed reaction is N-(5Z,8Z,11Z,14Z-eicosatetraenoyl)-sn-glycero-3-phosphoethanolamine + H2O = N-(5Z,8Z,11Z,14Z-eicosatetraenoyl)-ethanolamine + sn-glycerol 3-phosphate + H(+). Its activity is regulated as follows. Inhibited by EDTA, calcium chloride, and zinc chloride. Enhanced by magnesium chloride. Glycerophosphodiester phosphodiesterase activity can be modulated by G-protein signaling pathways. Hydrolyzes the phosphodiester bond of glycerophosphodiesters such as glycerophosphoinositol (GroPIns) and glycerophosphoethanolamine (GroPEth), to yield a glycerol phosphate and an alcohol. Hydrolyzes glycerophospho-N-acylethanolamines to N-acylethanolamines in the brain and participates in bioactive N-acylethanolamine biosynthesis such as anandamide (an endocannabinoid), N-palmitoylethanolamine (an anti-inflammatory), and N-oleoylethanolamine (an anorexic). In addition, has a lysophospholipase D activity by hydrolyzing N-acyl-lysoplasmenylethanolamine (N-acyl-lysoPlsEt) to N-acylethanolamine. However lysophospholipase D activity is lower than glycerophosphodiester phosphodiesterase activity. Has little or no activity towards glycerophosphocholine. This chain is Glycerophosphodiester phosphodiesterase 1, found in Rattus norvegicus (Rat).